A 223-amino-acid chain; its full sequence is MINNEDFLDEIGDSHFSSNAKNPLREDAFDITDEEKIEKIKKDVENILQTLGMDLTDDSIKGTPNRVAKMFVKEIFGGLNPAKQPKASTFDNNYKYGEMLVEKNITVYSTCEHHLLPIIGRAHVAYISSGRVIGLSKMNRIVEYYAKRPQVQERLTMQIVQELQKALGTEDVACVIDAKHLCVNSRGIKDIESSTVTSEFGGKFKDPQTKREFLDYIKLDTQF.

The Zn(2+) site is built by Cys-111, His-114, and Cys-182.

It belongs to the GTP cyclohydrolase I family. As to quaternary structure, homomer.

The catalysed reaction is GTP + H2O = 7,8-dihydroneopterin 3'-triphosphate + formate + H(+). It functions in the pathway cofactor biosynthesis; 7,8-dihydroneopterin triphosphate biosynthesis; 7,8-dihydroneopterin triphosphate from GTP: step 1/1. In Flavobacterium johnsoniae (strain ATCC 17061 / DSM 2064 / JCM 8514 / BCRC 14874 / CCUG 350202 / NBRC 14942 / NCIMB 11054 / UW101) (Cytophaga johnsonae), this protein is GTP cyclohydrolase 1.